Reading from the N-terminus, the 232-residue chain is Large ribosomal subunit protein uL1 (232 aa).

It belongs to the universal ribosomal protein uL1 family. Part of the 50S ribosomal subunit.

Functionally, binds directly to 23S rRNA. The L1 stalk is quite mobile in the ribosome, and is involved in E site tRNA release. Protein L1 is also a translational repressor protein, it controls the translation of the L11 operon by binding to its mRNA. In Burkholderia ambifaria (strain MC40-6), this protein is Large ribosomal subunit protein uL1.